The chain runs to 184 residues: Ribosome-recycling factor (184 aa).

Residues 133 to 162 (RDGMDNLKQDENKKEISEDERKRHETEVQK) show a composition bias toward basic and acidic residues. Positions 133-163 (RDGMDNLKQDENKKEISEDERKRHETEVQKL) are disordered.

Belongs to the RRF family.

It localises to the cytoplasm. Responsible for the release of ribosomes from messenger RNA at the termination of protein biosynthesis. May increase the efficiency of translation by recycling ribosomes from one round of translation to another. The polypeptide is Ribosome-recycling factor (Sphingopyxis alaskensis (strain DSM 13593 / LMG 18877 / RB2256) (Sphingomonas alaskensis)).